The chain runs to 467 residues: tRNA-2-methylthio-N(6)-dimethylallyladenosine synthase (467 aa).

Positions 1–20 (MSDDTTQIEPAMAQETSPRA) are disordered. The MTTase N-terminal domain occupies 23 to 143 (RKVFVKTYGC…LPNALARVRG (121 aa)). The [4Fe-4S] cluster site is built by cysteine 32, cysteine 68, cysteine 106, cysteine 184, cysteine 188, and cysteine 191. Residues 170–402 (RKRGVSAFLT…QALLSAQQYA (233 aa)) enclose the Radical SAM core domain. The TRAM domain occupies 405–467 (DSMIGRKMDV…TNSLIAQKLA (63 aa)).

Belongs to the methylthiotransferase family. MiaB subfamily. As to quaternary structure, monomer. [4Fe-4S] cluster serves as cofactor.

It localises to the cytoplasm. The enzyme catalyses N(6)-dimethylallyladenosine(37) in tRNA + (sulfur carrier)-SH + AH2 + 2 S-adenosyl-L-methionine = 2-methylsulfanyl-N(6)-dimethylallyladenosine(37) in tRNA + (sulfur carrier)-H + 5'-deoxyadenosine + L-methionine + A + S-adenosyl-L-homocysteine + 2 H(+). In terms of biological role, catalyzes the methylthiolation of N6-(dimethylallyl)adenosine (i(6)A), leading to the formation of 2-methylthio-N6-(dimethylallyl)adenosine (ms(2)i(6)A) at position 37 in tRNAs that read codons beginning with uridine. The sequence is that of tRNA-2-methylthio-N(6)-dimethylallyladenosine synthase from Brucella abortus (strain S19).